Consider the following 262-residue polypeptide: Probable cutinase 1 (262 aa).

A signal peptide spans 1–19; it reads MAPLKSLLLGASLATLALS. Cystine bridges form between Cys-48–Cys-127 and Cys-74–Cys-88. The active-site Nucleophile is Ser-138. The cysteines at positions 189 and 196 are disulfide-linked. Residue Asp-193 is part of the active site. Residue His-206 is the Proton donor/acceptor of the active site. A disordered region spans residues 228–262; that stretch reads SSSTTSSSSDAASSSSAAGTSSSGLSGLSSFFGGL.

It belongs to the cutinase family.

It localises to the secreted. The catalysed reaction is cutin + H2O = cutin monomers.. Its function is as follows. Catalyzes the hydrolysis of complex carboxylic polyesters found in the cell wall of plants. Degrades cutin, a macromolecule that forms the structure of the plant cuticle. The chain is Probable cutinase 1 from Aspergillus niger (strain ATCC MYA-4892 / CBS 513.88 / FGSC A1513).